We begin with the raw amino-acid sequence, 106 residues long: Small ribosomal subunit protein uS10 (106 aa).

This sequence belongs to the universal ribosomal protein uS10 family. In terms of assembly, part of the 30S ribosomal subunit.

Its function is as follows. Involved in the binding of tRNA to the ribosomes. The sequence is that of Small ribosomal subunit protein uS10 from Prochlorococcus marinus (strain MIT 9301).